Consider the following 296-residue polypeptide: 4-hydroxy-tetrahydrodipicolinate synthase (296 aa).

T47 contributes to the pyruvate binding site. Residue Y135 is the Proton donor/acceptor of the active site. K163 serves as the catalytic Schiff-base intermediate with substrate. I205 lines the pyruvate pocket.

This sequence belongs to the DapA family. In terms of assembly, homotetramer; dimer of dimers.

Its subcellular location is the cytoplasm. It carries out the reaction L-aspartate 4-semialdehyde + pyruvate = (2S,4S)-4-hydroxy-2,3,4,5-tetrahydrodipicolinate + H2O + H(+). It functions in the pathway amino-acid biosynthesis; L-lysine biosynthesis via DAP pathway; (S)-tetrahydrodipicolinate from L-aspartate: step 3/4. Its function is as follows. Catalyzes the condensation of (S)-aspartate-beta-semialdehyde [(S)-ASA] and pyruvate to 4-hydroxy-tetrahydrodipicolinate (HTPA). In Macrococcus caseolyticus (strain JCSC5402) (Macrococcoides caseolyticum), this protein is 4-hydroxy-tetrahydrodipicolinate synthase.